The primary structure comprises 208 residues: ATP synthase subunit b (208 aa).

Positions 1 to 18 (MFVSTAFAQTATESQPAS) are enriched in polar residues. The interval 1-26 (MFVSTAFAQTATESQPASTAGEHGAA) is disordered. A helical membrane pass occupies residues 56–78 (SQVLWLAITFGLFYLFLSRVVLP).

The protein belongs to the ATPase B chain family. As to quaternary structure, F-type ATPases have 2 components, F(1) - the catalytic core - and F(0) - the membrane proton channel. F(1) has five subunits: alpha(3), beta(3), gamma(1), delta(1), epsilon(1). F(0) has three main subunits: a(1), b(2) and c(10-14). The alpha and beta chains form an alternating ring which encloses part of the gamma chain. F(1) is attached to F(0) by a central stalk formed by the gamma and epsilon chains, while a peripheral stalk is formed by the delta and b chains.

It is found in the cell inner membrane. Its function is as follows. F(1)F(0) ATP synthase produces ATP from ADP in the presence of a proton or sodium gradient. F-type ATPases consist of two structural domains, F(1) containing the extramembraneous catalytic core and F(0) containing the membrane proton channel, linked together by a central stalk and a peripheral stalk. During catalysis, ATP synthesis in the catalytic domain of F(1) is coupled via a rotary mechanism of the central stalk subunits to proton translocation. Component of the F(0) channel, it forms part of the peripheral stalk, linking F(1) to F(0). This chain is ATP synthase subunit b, found in Brucella melitensis biotype 1 (strain ATCC 23456 / CCUG 17765 / NCTC 10094 / 16M).